Reading from the N-terminus, the 299-residue chain is Foldase protein PrsA (299 aa).

Positions 1-19 (MKKWTIAASLSIGVLALSA) are cleaved as a signal peptide. A lipid anchor (N-palmitoyl cysteine) is attached at Cys-20. Residue Cys-20 is the site of S-diacylglycerol cysteine attachment. One can recognise a PpiC domain in the interval 137-227 (NTEIQAQHIL…HGTHIIKVND (91 aa)).

It belongs to the PrsA family.

It is found in the cell membrane. It catalyses the reaction [protein]-peptidylproline (omega=180) = [protein]-peptidylproline (omega=0). Plays a major role in protein secretion by helping the post-translocational extracellular folding of several secreted proteins. In Oceanobacillus iheyensis (strain DSM 14371 / CIP 107618 / JCM 11309 / KCTC 3954 / HTE831), this protein is Foldase protein PrsA.